We begin with the raw amino-acid sequence, 280 residues long: Glycoprotein G (280 aa).

Residues 1–24 form the signal peptide; that stretch reads MGHSGENVLCVALLAIYLAAGGAA. N-linked (GlcNAc...) asparagine; by host glycosylation is found at Asn85 and Asn111. The segment at 191–218 is disordered; sequence ESSEERVVATDSDSGSCEDDEKEEKSDC.

This sequence belongs to the alphaherpesvirinae glycoprotein G family.

The polypeptide is Glycoprotein G (gG) (Psittacid herpesvirus 1 (isolate Amazon parrot/-/97-0001/1997) (PsHV-1)).